We begin with the raw amino-acid sequence, 399 residues long: Myb-related transcription factor, partner of profilin (399 aa).

The Myb-like domain occupies 12–84; sequence TTRLRKPRFS…EVQKRWNDFK (73 aa). The Nuclear localization signal signature appears at 83-86; the sequence is FKRR. Disordered regions lie at residues 87–108, 127–261, 297–332, and 358–399; these read TKEK…AEDA, PGAG…PSLD, LLPG…PKVE, and APRS…WKSP. Residues 127–136 are compositionally biased toward low complexity; that stretch reads PGAGAGAEEP. Residues 137-149 show a composition bias toward pro residues; it reads PAAPSSQPPPPSA. The span at 156–170 shows a compositional bias: basic and acidic residues; the sequence is LSEDRREDRRADTSA. Pro residues-rich tracts occupy residues 219 to 252, 305 to 329, and 366 to 377; these read SPPP…PPPT, SLPP…PPAP, and PRPPPAPLPPHD. The span at 381-399 shows a compositional bias: basic residues; sequence HKRRKGFPTRKRRGRWKSP. 2 consecutive short sequence motifs (nuclear localization signal) follow at residues 382 to 385 and 390 to 393; these read KRRK and RKRR.

As to quaternary structure, interacts with PFN1. Homodimer and heterodimer with PFN1.

The protein resides in the nucleus. Transcriptional repressor; DNA-binding protein that specifically recognizes the core sequence 5'-YAAC[GT]G-3'. Dimerization with PFN1 reduces its DNA-binding capacity. This Homo sapiens (Human) protein is Myb-related transcription factor, partner of profilin (MYPOP).